Consider the following 143-residue polypeptide: Cytochrome c-type biogenesis protein CcmE (143 aa).

Residues 1–8 (MTPVRRRK) are Cytoplasmic-facing. A helical; Signal-anchor for type II membrane protein transmembrane segment spans residues 9–29 (LFILLFALSVLSAAAALVLYA). Residues 30–143 (LRQNISLFYT…KSALADKVKQ (114 aa)) are Periplasmic-facing. Residues H124 and Y128 each coordinate heme.

This sequence belongs to the CcmE/CycJ family.

The protein localises to the cell inner membrane. In terms of biological role, heme chaperone required for the biogenesis of c-type cytochromes. Transiently binds heme delivered by CcmC and transfers the heme to apo-cytochromes in a process facilitated by CcmF and CcmH. In Legionella pneumophila, this protein is Cytochrome c-type biogenesis protein CcmE.